We begin with the raw amino-acid sequence, 173 residues long: Photosystem I assembly protein Ycf3 (173 aa).

TPR repeat units lie at residues 35 to 68 (AFVY…EEDP), 72 to 105 (SYIL…NPRM), and 120 to 153 (GEKA…APNN).

This sequence belongs to the Ycf3 family.

It is found in the cellular thylakoid membrane. Its function is as follows. Essential for the assembly of the photosystem I (PSI) complex. May act as a chaperone-like factor to guide the assembly of the PSI subunits. This Microcystis aeruginosa (strain NIES-843 / IAM M-2473) protein is Photosystem I assembly protein Ycf3.